A 310-amino-acid chain; its full sequence is 4-diphosphocytidyl-2-C-methyl-D-erythritol kinase (310 aa).

Lys-11 is a catalytic residue. Residue 95–105 (PIGAGLAGGSA) participates in ATP binding. The active site involves Asp-137.

The protein belongs to the GHMP kinase family. IspE subfamily.

The enzyme catalyses 4-CDP-2-C-methyl-D-erythritol + ATP = 4-CDP-2-C-methyl-D-erythritol 2-phosphate + ADP + H(+). It participates in isoprenoid biosynthesis; isopentenyl diphosphate biosynthesis via DXP pathway; isopentenyl diphosphate from 1-deoxy-D-xylulose 5-phosphate: step 3/6. Its function is as follows. Catalyzes the phosphorylation of the position 2 hydroxy group of 4-diphosphocytidyl-2C-methyl-D-erythritol. The chain is 4-diphosphocytidyl-2-C-methyl-D-erythritol kinase from Acaryochloris marina (strain MBIC 11017).